A 226-amino-acid polypeptide reads, in one-letter code: 2-C-methyl-D-erythritol 4-phosphate cytidylyltransferase (226 aa).

Belongs to the IspD/TarI cytidylyltransferase family. IspD subfamily.

It carries out the reaction 2-C-methyl-D-erythritol 4-phosphate + CTP + H(+) = 4-CDP-2-C-methyl-D-erythritol + diphosphate. It participates in isoprenoid biosynthesis; isopentenyl diphosphate biosynthesis via DXP pathway; isopentenyl diphosphate from 1-deoxy-D-xylulose 5-phosphate: step 2/6. Functionally, catalyzes the formation of 4-diphosphocytidyl-2-C-methyl-D-erythritol from CTP and 2-C-methyl-D-erythritol 4-phosphate (MEP). The sequence is that of 2-C-methyl-D-erythritol 4-phosphate cytidylyltransferase from Rhodococcus jostii (strain RHA1).